Consider the following 319-residue polypeptide: Pantothenate kinase (319 aa).

97-104 is an ATP binding site; it reads GSVAVGKS.

The protein belongs to the prokaryotic pantothenate kinase family.

It is found in the cytoplasm. It carries out the reaction (R)-pantothenate + ATP = (R)-4'-phosphopantothenate + ADP + H(+). It participates in cofactor biosynthesis; coenzyme A biosynthesis; CoA from (R)-pantothenate: step 1/5. The protein is Pantothenate kinase of Mesorhizobium japonicum (strain LMG 29417 / CECT 9101 / MAFF 303099) (Mesorhizobium loti (strain MAFF 303099)).